Consider the following 291-residue polypeptide: uncharacterized protein (291 aa).

10 consecutive transmembrane segments (helical) span residues 1–21 (MHNL…LKIA), 26–46 (IIIE…SYFL), 67–87 (PIFL…SKAV), 95–115 (SDAA…LIFH), 117–137 (TLSQ…FCLL), 149–169 (FKGV…DILF), 179–199 (FPAT…IYLF), 208–228 (SSVI…LFYI), 241–261 (VFAG…ALVF), and 270–290 (WLGI…DKII). The region spanning 107-138 (ILAAFLIFHETLSQSKIIGVVLAFIGLFCLLT) is the EamA domain.

It is found in the cell membrane. This is an uncharacterized protein from Haemophilus influenzae (strain ATCC 51907 / DSM 11121 / KW20 / Rd).